Reading from the N-terminus, the 204-residue chain is Tat proofreading chaperone DmsD (204 aa).

Belongs to the TorD/DmsD family. DmsD subfamily.

Its function is as follows. Required for biogenesis/assembly of DMSO reductase, but not for the interaction of the DmsA signal peptide with the Tat system. May be part of a chaperone cascade complex that facilitates a folding-maturation pathway for the substrate protein. This is Tat proofreading chaperone DmsD from Salmonella typhi.